Consider the following 171-residue polypeptide: MTKWFNVGKIVNTHGVKGEIRVVSLTDFPEERYKVGNTLYISNEKGGEPFPVKITSHRQHKTFDLLTFEGYGNVNEVEQFKGSLLKVPEDQLGELAEGEYYYHEIIGCNVVTEEGEALGTIKEVLSPGANDVWVIKRPKGQDLLIPYIDDVVLQVNIENKLVTIHVMEGLL.

A PRC barrel domain is found at 97–170 (EGEYYYHEII…LVTIHVMEGL (74 aa)).

This sequence belongs to the RimM family. In terms of assembly, binds ribosomal protein uS19.

It is found in the cytoplasm. Its function is as follows. An accessory protein needed during the final step in the assembly of 30S ribosomal subunit, possibly for assembly of the head region. Essential for efficient processing of 16S rRNA. May be needed both before and after RbfA during the maturation of 16S rRNA. It has affinity for free ribosomal 30S subunits but not for 70S ribosomes. In Bacillus cereus (strain ZK / E33L), this protein is Ribosome maturation factor RimM.